Consider the following 471-residue polypeptide: Steroid C26-monooxygenase (471 aa).

Position 238 (Gly-238) interacts with substrate. Heme is bound at residue Cys-412.

It belongs to the cytochrome P450 family. Heme serves as cofactor.

The enzyme catalyses cholest-4-en-3-one + 6 reduced [2Fe-2S]-[ferredoxin] + 3 O2 + 5 H(+) = (25S)-3-oxocholest-4-en-26-oate + 6 oxidized [2Fe-2S]-[ferredoxin] + 4 H2O. Its function is as follows. Involved in the utilization of cholesterol as the sole carbon and energy source by degrading the side chain. Primarily catalyzes the sequential oxidation of the terminal methyl of cholest-4-en-3-one into (25S)-26-hydroxycholest-4-en-3-one (alcohol), (25S)-26-oxocholest-4-en-3-one (aldehyde), to finally yield the carboxylic acid (25S)-3-oxocholest-4-en-26-oate. Also able to sequentially oxidize cholesterol itself, not only cholest-4-en-3-one. In Rhodococcus jostii (strain RHA1), this protein is Steroid C26-monooxygenase (cyp125).